A 220-amino-acid polypeptide reads, in one-letter code: GILT-like protein CBG03282 (220 aa).

Residues 1-22 (MTIIRTLFVYYSFLFILVLCSS) form the signal peptide. A glycan (N-linked (GlcNAc...) asparagine) is linked at asparagine 131.

This sequence belongs to the GILT family.

It localises to the secreted. In Caenorhabditis briggsae, this protein is GILT-like protein CBG03282.